Here is a 210-residue protein sequence, read N- to C-terminus: UPF0301 protein OCAR_7326/OCA5_c07920 (210 aa).

Belongs to the UPF0301 (AlgH) family.

The protein is UPF0301 protein OCAR_7326/OCA5_c07920 of Afipia carboxidovorans (strain ATCC 49405 / DSM 1227 / KCTC 32145 / OM5) (Oligotropha carboxidovorans).